The primary structure comprises 393 residues: NAD(P)H-quinone oxidoreductase subunit H, chloroplastic (393 aa).

This sequence belongs to the complex I 49 kDa subunit family. NDH is composed of at least 16 different subunits, 5 of which are encoded in the nucleus.

It localises to the plastid. Its subcellular location is the chloroplast thylakoid membrane. The enzyme catalyses a plastoquinone + NADH + (n+1) H(+)(in) = a plastoquinol + NAD(+) + n H(+)(out). The catalysed reaction is a plastoquinone + NADPH + (n+1) H(+)(in) = a plastoquinol + NADP(+) + n H(+)(out). Its function is as follows. NDH shuttles electrons from NAD(P)H:plastoquinone, via FMN and iron-sulfur (Fe-S) centers, to quinones in the photosynthetic chain and possibly in a chloroplast respiratory chain. The immediate electron acceptor for the enzyme in this species is believed to be plastoquinone. Couples the redox reaction to proton translocation, and thus conserves the redox energy in a proton gradient. This Lobularia maritima (Sweet alyssum) protein is NAD(P)H-quinone oxidoreductase subunit H, chloroplastic.